Consider the following 102-residue polypeptide: NADH-quinone oxidoreductase subunit K (102 aa).

The next 3 membrane-spanning stretches (helical) occupy residues 6-26, 30-50, and 62-82; these read LEHG…GLMV, ILFV…AFVV, and VMFI…LAIL.

It belongs to the complex I subunit 4L family. NDH-1 is composed of 13 different subunits. Subunits NuoA, H, J, K, L, M, N constitute the membrane sector of the complex.

Its subcellular location is the cell inner membrane. It catalyses the reaction a quinone + NADH + 5 H(+)(in) = a quinol + NAD(+) + 4 H(+)(out). Its function is as follows. NDH-1 shuttles electrons from NADH, via FMN and iron-sulfur (Fe-S) centers, to quinones in the respiratory chain. The immediate electron acceptor for the enzyme in this species is believed to be ubiquinone. Couples the redox reaction to proton translocation (for every two electrons transferred, four hydrogen ions are translocated across the cytoplasmic membrane), and thus conserves the redox energy in a proton gradient. The protein is NADH-quinone oxidoreductase subunit K of Pseudomonas aeruginosa (strain LESB58).